Here is a 423-residue protein sequence, read N- to C-terminus: L-cysteine:1D-myo-inositol 2-amino-2-deoxy-alpha-D-glucopyranoside ligase (423 aa).

C45 is a Zn(2+) binding site. L-cysteinyl-5'-AMP contacts are provided by residues 45–48, T60, and 83–85; these read CGIT and NVT. Residues 47–57 carry the 'HIGH' region motif; the sequence is ITPYDATHIGH. Residues 197–202 carry the 'ERGGDP' region motif; sequence DRGGDP. W238 contributes to the L-cysteinyl-5'-AMP binding site. C242 provides a ligand contact to Zn(2+). 260-262 is an L-cysteinyl-5'-AMP binding site; sequence GSD. Zn(2+) is bound at residue H267. An L-cysteinyl-5'-AMP-binding site is contributed by I294. Positions 300 to 304 match the 'KMSKS' region motif; the sequence is KMSKS.

Belongs to the class-I aminoacyl-tRNA synthetase family. MshC subfamily. As to quaternary structure, monomer. The cofactor is Zn(2+).

The catalysed reaction is 1D-myo-inositol 2-amino-2-deoxy-alpha-D-glucopyranoside + L-cysteine + ATP = 1D-myo-inositol 2-(L-cysteinylamino)-2-deoxy-alpha-D-glucopyranoside + AMP + diphosphate + H(+). Catalyzes the ATP-dependent condensation of GlcN-Ins and L-cysteine to form L-Cys-GlcN-Ins. The polypeptide is L-cysteine:1D-myo-inositol 2-amino-2-deoxy-alpha-D-glucopyranoside ligase (Jonesia denitrificans (strain ATCC 14870 / DSM 20603 / BCRC 15368 / CIP 55.134 / JCM 11481 / NBRC 15587 / NCTC 10816 / Prevot 55134) (Listeria denitrificans)).